The chain runs to 125 residues: Glycine cleavage system H protein (125 aa).

Residues Ser21–Lys103 form the Lipoyl-binding domain. Lys62 carries the N6-lipoyllysine modification.

It belongs to the GcvH family. The glycine cleavage system is composed of four proteins: P, T, L and H. Requires (R)-lipoate as cofactor.

Its function is as follows. The glycine cleavage system catalyzes the degradation of glycine. The H protein shuttles the methylamine group of glycine from the P protein to the T protein. This chain is Glycine cleavage system H protein, found in Psychromonas ingrahamii (strain DSM 17664 / CCUG 51855 / 37).